The following is a 570-amino-acid chain: Mitogen-activated protein kinase 11 (570 aa).

Positions 26 to 317 (YEVLEVIGKG…AQEALADPYF (292 aa)) constitute a Protein kinase domain. ATP is bound by residues 32-40 (IGKGSYGLV) and Lys-55. Asp-152 functions as the Proton acceptor in the catalytic mechanism. Thr-188 is modified (phosphothreonine). The TXY signature appears at 188–190 (TDY). Phosphotyrosine is present on Tyr-190.

The protein belongs to the protein kinase superfamily. CMGC Ser/Thr protein kinase family. MAP kinase subfamily. In terms of processing, dually phosphorylated on Thr-188 and Tyr-190, which activates the enzyme.

It carries out the reaction L-seryl-[protein] + ATP = O-phospho-L-seryl-[protein] + ADP + H(+). It catalyses the reaction L-threonyl-[protein] + ATP = O-phospho-L-threonyl-[protein] + ADP + H(+). Its activity is regulated as follows. Activated by threonine and tyrosine phosphorylation. The polypeptide is Mitogen-activated protein kinase 11 (MPK11) (Oryza sativa subsp. japonica (Rice)).